Reading from the N-terminus, the 251-residue chain is 5'-nucleotidase SurE (251 aa).

The a divalent metal cation site is built by Asp8, Asp9, Ser40, and Asn95.

This sequence belongs to the SurE nucleotidase family. It depends on a divalent metal cation as a cofactor.

The protein resides in the cytoplasm. It catalyses the reaction a ribonucleoside 5'-phosphate + H2O = a ribonucleoside + phosphate. Its function is as follows. Nucleotidase that shows phosphatase activity on nucleoside 5'-monophosphates. The protein is 5'-nucleotidase SurE of Desulfitobacterium hafniense (strain DSM 10664 / DCB-2).